Reading from the N-terminus, the 392-residue chain is Enoyl-[acyl-carrier-protein] reductase [NADH] (392 aa).

NAD(+) contacts are provided by residues 46–51, 72–73, 108–109, and 136–137; these read GSSSGY, LE, DA, and VA. Y225 provides a ligand contact to substrate. The active-site Proton donor is the Y235. Residues K244 and 273–275 contribute to the NAD(+) site; that span reads LVT.

This sequence belongs to the TER reductase family. In terms of assembly, monomer.

It catalyses the reaction a 2,3-saturated acyl-[ACP] + NAD(+) = a (2E)-enoyl-[ACP] + NADH + H(+). The protein operates within lipid metabolism; fatty acid biosynthesis. Its function is as follows. Involved in the final reduction of the elongation cycle of fatty acid synthesis (FAS II). Catalyzes the reduction of a carbon-carbon double bond in an enoyl moiety that is covalently linked to an acyl carrier protein (ACP). This Streptomyces avermitilis (strain ATCC 31267 / DSM 46492 / JCM 5070 / NBRC 14893 / NCIMB 12804 / NRRL 8165 / MA-4680) protein is Enoyl-[acyl-carrier-protein] reductase [NADH].